Here is a 939-residue protein sequence, read N- to C-terminus: Translation initiation factor IF-2 (939 aa).

The span at 81–94 shows a compositional bias: basic and acidic residues; that stretch reads EEQSRKAYEKEQQL. 2 disordered regions span residues 81–303 and 316–337; these read EEQS…KKVE and TISG…KMRR. The segment covering 99–108 has biased composition (low complexity); sequence SSAPSPAPAA. 2 stretches are compositionally biased toward basic and acidic residues: residues 112 to 127 and 148 to 173; these read EPVK…RHEP and SPKE…EKAA. Residues 178 to 189 are compositionally biased toward low complexity; that stretch reads EAQPEAQSQQEP. Residues 244–255 show a composition bias toward basic and acidic residues; that stretch reads FKENAAELKDEF. The span at 276 to 287 shows a compositional bias: low complexity; it reads AAGEGESTTGGE. Residues 292–301 show a composition bias toward basic residues; that stretch reads KKKKGKKKKK. A compositionally biased stretch (low complexity) spans 318–328; it reads SGMDDSGSSGS. A tr-type G domain is found at 436-606; the sequence is TRPPVVTIMG…LTEAEVRELK (171 aa). The tract at residues 445 to 452 is G1; the sequence is GHVDHGKT. Residue 445 to 452 participates in GTP binding; the sequence is GHVDHGKT. The G2 stretch occupies residues 470 to 474; it reads GITQH. Residues 492–495 are G3; it reads DTPG. GTP is bound by residues 492 to 496 and 546 to 549; these read DTPGH and NKID. The tract at residues 546–549 is G4; sequence NKID. The G5 stretch occupies residues 582 to 584; sequence SAK.

This sequence belongs to the TRAFAC class translation factor GTPase superfamily. Classic translation factor GTPase family. IF-2 subfamily.

It is found in the cytoplasm. In terms of biological role, one of the essential components for the initiation of protein synthesis. Protects formylmethionyl-tRNA from spontaneous hydrolysis and promotes its binding to the 30S ribosomal subunits. Also involved in the hydrolysis of GTP during the formation of the 70S ribosomal complex. This chain is Translation initiation factor IF-2, found in Chlorobaculum parvum (strain DSM 263 / NCIMB 8327) (Chlorobium vibrioforme subsp. thiosulfatophilum).